Here is a 216-residue protein sequence, read N- to C-terminus: Probable transaldolase (216 aa).

K83 acts as the Schiff-base intermediate with substrate in catalysis.

This sequence belongs to the transaldolase family. Type 3B subfamily.

The protein resides in the cytoplasm. It catalyses the reaction D-sedoheptulose 7-phosphate + D-glyceraldehyde 3-phosphate = D-erythrose 4-phosphate + beta-D-fructose 6-phosphate. It participates in carbohydrate degradation; pentose phosphate pathway; D-glyceraldehyde 3-phosphate and beta-D-fructose 6-phosphate from D-ribose 5-phosphate and D-xylulose 5-phosphate (non-oxidative stage): step 2/3. In terms of biological role, transaldolase is important for the balance of metabolites in the pentose-phosphate pathway. This chain is Probable transaldolase, found in Thermoanaerobacter sp. (strain X514).